The sequence spans 305 residues: Oxygen-dependent coproporphyrinogen-III oxidase (305 aa).

S93 provides a ligand contact to substrate. The a divalent metal cation site is built by H97 and H107. H107 acts as the Proton donor in catalysis. Residue 109–111 coordinates substrate; sequence NVR. A divalent metal cation is bound by residues H146 and H176. The important for dimerization stretch occupies residues 241–276; that stretch reads YVEFNLVFDRGTLFGLQSGGRTESILMSLPPQVRWG. Residue 259-261 participates in substrate binding; the sequence is GGR.

Belongs to the aerobic coproporphyrinogen-III oxidase family. Homodimer. A divalent metal cation serves as cofactor.

The protein resides in the cytoplasm. It catalyses the reaction coproporphyrinogen III + O2 + 2 H(+) = protoporphyrinogen IX + 2 CO2 + 2 H2O. Its pathway is porphyrin-containing compound metabolism; protoporphyrin-IX biosynthesis; protoporphyrinogen-IX from coproporphyrinogen-III (O2 route): step 1/1. Its function is as follows. Involved in the heme biosynthesis. Catalyzes the aerobic oxidative decarboxylation of propionate groups of rings A and B of coproporphyrinogen-III to yield the vinyl groups in protoporphyrinogen-IX. The polypeptide is Oxygen-dependent coproporphyrinogen-III oxidase (Pseudomonas paraeruginosa (strain DSM 24068 / PA7) (Pseudomonas aeruginosa (strain PA7))).